Reading from the N-terminus, the 707-residue chain is Caprin-1 (707 aa).

2 stretches are compositionally biased toward low complexity: residues 1-15 and 22-43; these read MPSA…SKSS and GSSG…PATG. The disordered stretch occupies residues 1–48; sequence MPSATSHSGSGSKSSGPPPPSGSSGSEAAAGAAAPASQHPATGTGAVQ. P2 is subject to N-acetylproline. S10 is subject to Phosphoserine. Positions 58–92 form a coiled coil; sequence VIDKKLRNLEKKKGKLDDYQERMNKGERLNQDQLD. S113 carries the post-translational modification Phosphoserine. Residues 123 to 151 are a coiled coil; sequence KTIKKTARREQLMREEAEQKRLKTVLELQ. The residue at position 163 (R163) is an Omega-N-methylarginine. A compositionally biased stretch (low complexity) spans 325 to 335; that stretch reads LQQQPQAASPS. Positions 325–347 are disordered; that stretch reads LQQQPQAASPSVPEPHSLTPVAQ. A phosphoserine mark is found at S333 and S341. Positions 358–379 are G3BP1-binding; sequence QDLMAQMQGPYNFIQDSMLDFE. 3 disordered regions span residues 412-496, 526-558, and 570-707; these read ESRL…AGTS, PANE…EQTE, and TYHG…QQVN. Positions 431–452 are enriched in polar residues; it reads PLVSSTSEGYTASQPLYQPSHA. The span at 453–462 shows a compositional bias: basic and acidic residues; that stretch reads TEQRPQKEPM. The segment covering 465–474 has biased composition (polar residues); it reads IQATISLNTD. A compositionally biased stretch (low complexity) spans 475 to 489; the sequence is QTTASSSLPAASQPQ. Polar residues-rich tracts occupy residues 533–552 and 572–603; these read LKQQ…SQPH and HGSQ…QPYY. Residue Y623 is modified to Phosphotyrosine. 2 positions are modified to omega-N-methylarginine: R624 and R631. Phosphotyrosine occurs at positions 634 and 637. At R638 the chain carries Omega-N-methylarginine. The segment covering 640–655 has biased composition (polar residues); that stretch reads SFSNTPNSGYSQSQFT. S642 and S647 each carry an O-linked (GlcNAc) serine glycan. Y649, Y660, Y663, and Y668 each carry phosphotyrosine. 2 stretches are compositionally biased toward low complexity: residues 674–684 and 695–707; these read RGSGQSGPRGA and NRGM…QQVN. At R696 the chain carries Asymmetric dimethylarginine; alternate. R696 carries the post-translational modification Omega-N-methylarginine; alternate.

Belongs to the caprin family. As to quaternary structure, may form homomultimers. Interacts with G3BP1; interaction is direct and promotes stress granule formation. Interacts with G3BP2; interaction is direct and promotes stress granule formation. Interacts with PQBP1. Interacts with DDX3X. Interacts (when phosphorylated by EPHA4) with FMR1; interaction with FMR1 promotes formation of a membraneless compartment. Post-translationally, tyrosine phosphorylation by EPHA4 promotes interaction with FMR1 and liquid-liquid phase separation (LLPS) for the formation of a membraneless compartment that concentrates mRNAs with associated regulatory factors. O-glycosylated (O-GlcNAcylated), in a cell cycle-dependent manner. O-glycosylation by OGT inhibit ability to undergo liquid-liquid phase separation (LLPS). In terms of tissue distribution, highest expression in thymus, spleen and brain (at protein level). Lower levels in kidney, muscle and liver (at protein level).

Its subcellular location is the cytoplasm. The protein localises to the cytoplasmic ribonucleoprotein granule. The protein resides in the cytosol. It localises to the cell projection. It is found in the dendrite. Its subcellular location is the lamellipodium. Ability to mediate liquid-liquid phase separation is regulated by ATP: moderate concentrations of ATP enhance phase separation, whereas high concentrations of ATP lead to inhibition of phase separation. MRNA-binding protein that acts as a regulator of mRNAs transport, translation and/or stability, and which is involved in neurogenesis, synaptic plasticity in neurons and cell proliferation and migration in multiple cell types. Plays an essential role in cytoplasmic stress granule formation. Acts as an mRNA regulator by mediating formation of some phase-separated membraneless compartment: undergoes liquid-liquid phase separation upon binding to target mRNAs, leading to assemble mRNAs into cytoplasmic ribonucleoprotein granules that concentrate mRNAs with associated regulatory factors. Undergoes liquid-liquid phase separation following phosphorylation and interaction with FMR1, promoting formation of cytoplasmic ribonucleoprotein granules that concentrate mRNAs with factors that inhibit translation and mediate deadenylation of target mRNAs. In these cytoplasmic ribonucleoprotein granules, CAPRIN1 mediates recruitment of CNOT7 deadenylase, leading to mRNA deadenylation and degradation. Binds directly and selectively to MYC and CCND2 mRNAs. In neuronal cells, directly binds to several mRNAs associated with RNA granules, including BDNF, CAMK2A, CREB1, MAP2, NTRK2 mRNAs, as well as to GRIN1 and KPNB1 mRNAs, but not to rRNAs. The protein is Caprin-1 (Caprin1) of Mus musculus (Mouse).